We begin with the raw amino-acid sequence, 190 residues long: Major sperm protein 32 (190 aa).

Positions 72–189 (MIQTQPGTKI…RRKNLPIEYN (118 aa)) constitute an MSP domain.

Sperm.

The protein localises to the cell projection. It is found in the pseudopodium. Its subcellular location is the cytoplasm. The protein resides in the cytoskeleton. In terms of biological role, central component in molecular interactions underlying sperm crawling. Forms an extensive filament system that extends from sperm villipoda, along the leading edge of the pseudopod. This Caenorhabditis elegans protein is Major sperm protein 32 (msp-32).